The chain runs to 980 residues: SLIT and NTRK-like protein 3 (980 aa).

An N-terminal signal peptide occupies residues 1–27 (MMKPSIAEMLHRGRMLWIILLSTIALG). Topologically, residues 30–655 (TPIPLIEDSE…SPPGGPVPLS (626 aa)) are extracellular. The N-linked (GlcNAc...) asparagine glycan is linked to Asn69. LRR repeat units lie at residues 79 to 100 (RPFKLYLQRNSMRRLYTNSFLH), 103 to 124 (NAVSINLGNNALQDIQTGAFNG), 127 to 148 (ILKRLYLHENKLDVFRNDTFLG), 151 to 172 (SLEYLQADYNVIKRIESGAFRN), 175 to 196 (KLRVLILNDNLIPVLPTNLFKA), and 198 to 219 (SLTHLDLRGNRLKVLFYRGMLD). The region spanning 233-284 (NPWNCTCEIVQLKSWLERIPYTALVGDITCETPFHFHGKDLREIKKTELCPL) is the LRRCT 1 domain. The disordered stretch occupies residues 326-361 (EYKSSNKQPKPTKQPRTPRPPSTSQALYPGPNQPPI). The LRRNT domain maps to 365-407 (QTRPPIPIICPTGCTCNLHINDLGLTVNCKERGFNNISELLPR). LRR repeat units lie at residues 410-431 (NAKKLYLSSNLIQKIYRSDFWN), 434-455 (SLDLLHLGNNRISYVQDGAFIN), 458-479 (NLKSLFLNGNDIEKLTPGMFRG), 482-503 (SLHYLYFEFNVIREIQPAAFSL), 506-527 (NLKLLFLNNNLLRTLPTDAFAG), and 529-550 (SLARLNLRKNYFLYLPVAGVLE). An LRRCT 2 domain is found at 563-614 (NPWDCTCDLVPFKQWIETISSVSVVGDVLCRTPENLTHRDVRTIELEVLCPE). Asn597 is a glycosylation site (N-linked (GlcNAc...) asparagine). Residues 622–644 (GPSPPQPGDYHPNGGPTSASPYE) form a disordered region. The helical transmembrane segment at 656 to 676 (VLILSLLVLFFSAVFVAAGLF) threads the bilayer. Topologically, residues 677 to 980 (AYVLRRRRKK…EVLEKTAYRF (304 aa)) are cytoplasmic. Disordered stretches follow at residues 709–735 (LFEDSGGNSGGSGGGGRPTLSSPEKAP) and 762–785 (EEEVAASAAQDTGATDRGGPGTQP). The span at 715–725 (GNSGGSGGGGR) shows a compositional bias: gly residues.

The protein belongs to the SLITRK family. As to expression, broadly expressed in embryonic brain with highest expression in cortical plate, pyramidal cell layer of the hippocampus, thalamus and hypothalamus.

Its subcellular location is the membrane. Functionally, suppresses neurite outgrowth. In Mus musculus (Mouse), this protein is SLIT and NTRK-like protein 3 (Slitrk3).